We begin with the raw amino-acid sequence, 98 residues long: Bombyxin A-3 homolog (98 aa).

The N-terminal stretch at 1-18 (MRTQVLFLVLEVAAMASG) is a signal peptide. Intrachain disulfides connect C26–C85, C38–C98, and C84–C89. The propeptide at 47–75 (TPYTSSESEGYGWRWLAPQRARQLAGARG) is c peptide like.

Belongs to the insulin family. As to quaternary structure, heterodimer of a B chain and an A chain linked by two disulfide bonds.

Its subcellular location is the secreted. Functionally, brain peptide responsible for activation of prothoracic glands to produce ecdysone in insects. This Samia cynthia (Ailanthus silkmoth) protein is Bombyxin A-3 homolog (SBXA3).